A 299-amino-acid chain; its full sequence is Ribonuclease H2 subunit A (299 aa).

Residue M1 is modified to N-acetylmethionine. Residues 28–251 form the RNase H type-2 domain; it reads PCVLGVDEAG…AQSILESEAE (224 aa). A divalent metal cation is bound by residues D34, E35, and D142. T205 and T217 each carry phosphothreonine. Residues 250-272 form a disordered region; sequence AEDVKWEDSETGDPKGPGKIKSY. S258 carries the phosphoserine modification.

It belongs to the RNase HII family. Eukaryotic subfamily. As to quaternary structure, the RNase H2 complex is a heterotrimer composed of the catalytic subunit RNASEH2A and the non-catalytic subunits RNASEH2B and RNASEH2C. Requires Mn(2+) as cofactor. Mg(2+) serves as cofactor.

Its subcellular location is the nucleus. The enzyme catalyses Endonucleolytic cleavage to 5'-phosphomonoester.. Catalytic subunit of RNase HII, an endonuclease that specifically degrades the RNA of RNA:DNA hybrids. Participates in DNA replication, possibly by mediating the removal of lagging-strand Okazaki fragment RNA primers during DNA replication. Mediates the excision of single ribonucleotides from DNA:RNA duplexes. This chain is Ribonuclease H2 subunit A (RNASEH2A), found in Bos taurus (Bovine).